A 280-amino-acid chain; its full sequence is MDVIQRIKEKYDEFTNAEKKIADTILSDPKGIIESSISDLSEKAGVKSEASVVKFYKKLGLNSFQQFKVLLAQSISRAPLEIVYEDVSSEDDTKTITEKIFKATVRAILDTLNWLDIDSIERTVDLFKNAQRIIFIGFAASAAVAFDAFHKFTRIGKNCLFSNDEHIIAAILATASPSDLLVAISHTGETISVVNFAKKAKEMKMPVVTITGNRKSTLAKYSDVVLATNTKETKIRTDAMTSRIVQLVILDTIYTLLAARDPRAIENLNKSRLAVSELKY.

Residues 1 to 78 enclose the HTH rpiR-type domain; the sequence is MDVIQRIKEK…VLLAQSISRA (78 aa). Positions 37–57 form a DNA-binding region, H-T-H motif; it reads ISDLSEKAGVKSEASVVKFYK. The SIS domain occupies 123–263; it reads TVDLFKNAQR…YTLLAARDPR (141 aa).

This is an uncharacterized protein from Thermotoga maritima (strain ATCC 43589 / DSM 3109 / JCM 10099 / NBRC 100826 / MSB8).